Here is a 210-residue protein sequence, read N- to C-terminus: MDNDKHLKGTTTVGIVCSDGVVLATEKRATMGNFIASKTAKKIYQIDDLVGMTTAGSVGDAQQLVRMISVESKLYKMRRQESITIKGLTTLLSNILGGQRYFPLMVQLLVGGVDKNGPAIFSLDAMGGNIEETKAVATGSGSPMAYGVLEDRYHEGINVDEGMELAVRALYNAMKRDSASGNGIDVVKITADGYKRIETGEVDKILENLK.

Residues 1–9 constitute a propeptide, removed in mature form; by autocatalysis; that stretch reads MDNDKHLKG. Catalysis depends on Thr10, which acts as the Nucleophile.

The protein belongs to the peptidase T1B family. As to quaternary structure, the 20S proteasome core is composed of 14 alpha and 14 beta subunits that assemble into four stacked heptameric rings, resulting in a barrel-shaped structure. The two inner rings, each composed of seven catalytic beta subunits, are sandwiched by two outer rings, each composed of seven alpha subunits. The catalytic chamber with the active sites is on the inside of the barrel. Has a gated structure, the ends of the cylinder being occluded by the N-termini of the alpha-subunits. Is capped at one or both ends by the proteasome regulatory ATPase, PAN.

Its subcellular location is the cytoplasm. The catalysed reaction is Cleavage of peptide bonds with very broad specificity.. Its activity is regulated as follows. The formation of the proteasomal ATPase PAN-20S proteasome complex, via the docking of the C-termini of PAN into the intersubunit pockets in the alpha-rings, triggers opening of the gate for substrate entry. Interconversion between the open-gate and close-gate conformations leads to a dynamic regulation of the 20S proteasome proteolysis activity. Component of the proteasome core, a large protease complex with broad specificity involved in protein degradation. This chain is Proteasome subunit beta, found in Methanohalophilus mahii (strain ATCC 35705 / DSM 5219 / SLP).